The chain runs to 175 residues: MLDLGLSKMALIGVVALVVLGPERLPRVARTAGALFGRAQRYINDVKAEVSREIELDALRTMKTDFEQAARNVENTIHDNLREHERDLNAAWNSAVSPGGSAAADAPDGPSAASGEPSWRSIAAAPAKRRNWRVKKAVTPVWYKRATMRRTQVQSGAARVARHRPASLRRPARFL.

Residues 1–21 (MLDLGLSKMALIGVVALVVLG) form a helical membrane-spanning segment. The span at 96-115 (VSPGGSAAADAPDGPSAASG) shows a compositional bias: low complexity. Disordered stretches follow at residues 96-119 (VSPG…EPSW) and 152-175 (QVQS…ARFL). The span at 160–175 (VARHRPASLRRPARFL) shows a compositional bias: basic residues.

This sequence belongs to the TatB family. The Tat system comprises two distinct complexes: a TatABC complex, containing multiple copies of TatA, TatB and TatC subunits, and a separate TatA complex, containing only TatA subunits. Substrates initially bind to the TatABC complex, which probably triggers association of the separate TatA complex to form the active translocon.

The protein resides in the cell inner membrane. Its function is as follows. Part of the twin-arginine translocation (Tat) system that transports large folded proteins containing a characteristic twin-arginine motif in their signal peptide across membranes. Together with TatC, TatB is part of a receptor directly interacting with Tat signal peptides. TatB may form an oligomeric binding site that transiently accommodates folded Tat precursor proteins before their translocation. This is Sec-independent protein translocase protein TatB from Burkholderia pseudomallei (strain 1710b).